We begin with the raw amino-acid sequence, 129 residues long: Transcription antitermination protein NusB (129 aa).

The protein belongs to the NusB family.

In terms of biological role, involved in transcription antitermination. Required for transcription of ribosomal RNA (rRNA) genes. Binds specifically to the boxA antiterminator sequence of the ribosomal RNA (rrn) operons. In Staphylococcus aureus (strain bovine RF122 / ET3-1), this protein is Transcription antitermination protein NusB.